The chain runs to 743 residues: Catalase-peroxidase (743 aa).

Positions 1–21 (MSENHETVVSELNEESGGGCP) are disordered. A cross-link (tryptophyl-tyrosyl-methioninium (Trp-Tyr) (with M-257)) is located at residues 108 to 231 (WHSAGTYRIS…LGAVQMGLIY (124 aa)). The active-site Proton acceptor is the histidine 109. A cross-link (tryptophyl-tyrosyl-methioninium (Tyr-Met) (with W-108)) is located at residues 231-257 (YVNPEGPNGTPDPLAAARDIRETFRRM). Histidine 272 contacts heme b. Positions 275-296 (GKTHGAGDPDNVGPEPEGAPLE) are disordered.

Belongs to the peroxidase family. Peroxidase/catalase subfamily. As to quaternary structure, homodimer or homotetramer. Heme b is required as a cofactor. In terms of processing, formation of the three residue Trp-Tyr-Met cross-link is important for the catalase, but not the peroxidase activity of the enzyme.

The catalysed reaction is H2O2 + AH2 = A + 2 H2O. It carries out the reaction 2 H2O2 = O2 + 2 H2O. In terms of biological role, bifunctional enzyme with both catalase and broad-spectrum peroxidase activity. The protein is Catalase-peroxidase of Parafrankia sp. (strain EAN1pec).